We begin with the raw amino-acid sequence, 491 residues long: Ketol-acid reductoisomerase (NADP(+)) (491 aa).

A KARI N-terminal Rossmann domain is found at 15-208 (AQLGKCRFMG…GGHRAGVLES (194 aa)). NADP(+) is bound by residues 45–48 (CGAQ), arginine 68, arginine 76, serine 78, and 108–110 (DKQ). Histidine 132 is a catalytic residue. Glycine 158 is an NADP(+) binding site. KARI C-terminal knotted domains are found at residues 209–344 (SFVA…TAPQ) and 345–484 (YEGK…MTDM). Mg(2+) is bound by residues aspartate 217, glutamate 221, glutamate 389, and glutamate 393. Serine 414 serves as a coordination point for substrate.

It belongs to the ketol-acid reductoisomerase family. Requires Mg(2+) as cofactor.

The catalysed reaction is (2R)-2,3-dihydroxy-3-methylbutanoate + NADP(+) = (2S)-2-acetolactate + NADPH + H(+). The enzyme catalyses (2R,3R)-2,3-dihydroxy-3-methylpentanoate + NADP(+) = (S)-2-ethyl-2-hydroxy-3-oxobutanoate + NADPH + H(+). Its pathway is amino-acid biosynthesis; L-isoleucine biosynthesis; L-isoleucine from 2-oxobutanoate: step 2/4. It functions in the pathway amino-acid biosynthesis; L-valine biosynthesis; L-valine from pyruvate: step 2/4. In terms of biological role, involved in the biosynthesis of branched-chain amino acids (BCAA). Catalyzes an alkyl-migration followed by a ketol-acid reduction of (S)-2-acetolactate (S2AL) to yield (R)-2,3-dihydroxy-isovalerate. In the isomerase reaction, S2AL is rearranged via a Mg-dependent methyl migration to produce 3-hydroxy-3-methyl-2-ketobutyrate (HMKB). In the reductase reaction, this 2-ketoacid undergoes a metal-dependent reduction by NADPH to yield (R)-2,3-dihydroxy-isovalerate. This Escherichia fergusonii (strain ATCC 35469 / DSM 13698 / CCUG 18766 / IAM 14443 / JCM 21226 / LMG 7866 / NBRC 102419 / NCTC 12128 / CDC 0568-73) protein is Ketol-acid reductoisomerase (NADP(+)).